A 202-amino-acid polypeptide reads, in one-letter code: Orotate phosphoribosyltransferase (202 aa).

5-phospho-alpha-D-ribose 1-diphosphate is bound by residues Lys93 and 113–121 (EDIITTGGS). Residues Thr117 and Arg145 each coordinate orotate.

Belongs to the purine/pyrimidine phosphoribosyltransferase family. PyrE subfamily. As to quaternary structure, homodimer. The cofactor is Mg(2+).

The catalysed reaction is orotidine 5'-phosphate + diphosphate = orotate + 5-phospho-alpha-D-ribose 1-diphosphate. The protein operates within pyrimidine metabolism; UMP biosynthesis via de novo pathway; UMP from orotate: step 1/2. Functionally, catalyzes the transfer of a ribosyl phosphate group from 5-phosphoribose 1-diphosphate to orotate, leading to the formation of orotidine monophosphate (OMP). This chain is Orotate phosphoribosyltransferase, found in Campylobacter curvus (strain 525.92).